A 271-amino-acid polypeptide reads, in one-letter code: 3-methyl-2-oxobutanoate hydroxymethyltransferase (271 aa).

The Mg(2+) site is built by Asp-51 and Asp-90. 3-methyl-2-oxobutanoate-binding positions include 51–52 (DS), Asp-90, and Lys-118. Residue Glu-120 coordinates Mg(2+). Glu-186 serves as the catalytic Proton acceptor.

It belongs to the PanB family. In terms of assembly, homodecamer; pentamer of dimers. The cofactor is Mg(2+).

The protein resides in the cytoplasm. The catalysed reaction is 3-methyl-2-oxobutanoate + (6R)-5,10-methylene-5,6,7,8-tetrahydrofolate + H2O = 2-dehydropantoate + (6S)-5,6,7,8-tetrahydrofolate. Its pathway is cofactor biosynthesis; (R)-pantothenate biosynthesis; (R)-pantoate from 3-methyl-2-oxobutanoate: step 1/2. Functionally, catalyzes the reversible reaction in which hydroxymethyl group from 5,10-methylenetetrahydrofolate is transferred onto alpha-ketoisovalerate to form ketopantoate. In Xanthomonas axonopodis pv. citri (strain 306), this protein is 3-methyl-2-oxobutanoate hydroxymethyltransferase.